The sequence spans 277 residues: MKKTQQKEIENVTNITGVRQIELWRRDDLQHPRLDEVAEEVPVALVYNGISHVVMMASPKDLEYFALGFSLSEGIIESPRDIFGMDVVPSCNGLEVQIELSSRRFMGLKERRRALAGRTGCGVCGVEQLNDIGKPVQPLPFTQTFDLNKLDDALRHLNDFQPVGQLTSCTHAAAWMLPSGELVGGHEDVGRHVALDKLLGRRSQEGESWQQGAVLVSSRASYEMVQKSAMCGVEILFAVSAATTLAVEVAERCNLTLVGFCKPGRATVYTHPQRLSN.

Cys-121 (cysteine persulfide intermediate) is an active-site residue. A Mo-bis(molybdopterin guanine dinucleotide)-binding site is contributed by 260–265 (FCKPGR).

Belongs to the FdhD family.

It is found in the cytoplasm. In terms of biological role, required for formate dehydrogenase (FDH) activity. Acts as a sulfur carrier protein that transfers sulfur from IscS to the molybdenum cofactor prior to its insertion into FDH. The protein is Sulfur carrier protein FdhD of Shigella dysenteriae serotype 1 (strain Sd197).